A 541-amino-acid polypeptide reads, in one-letter code: Chaperonin GroEL (541 aa).

ATP-binding positions include 29–32 (TLGP), 86–90 (DGTTT), Gly-413, 477–479 (DAL), and Asp-493.

It belongs to the chaperonin (HSP60) family. In terms of assembly, forms a cylinder of 14 subunits composed of two heptameric rings stacked back-to-back. Interacts with the co-chaperonin GroES.

The protein localises to the cytoplasm. It carries out the reaction ATP + H2O + a folded polypeptide = ADP + phosphate + an unfolded polypeptide.. Its function is as follows. Together with its co-chaperonin GroES, plays an essential role in assisting protein folding. The GroEL-GroES system forms a nano-cage that allows encapsulation of the non-native substrate proteins and provides a physical environment optimized to promote and accelerate protein folding. This is Chaperonin GroEL from Clostridium botulinum (strain ATCC 19397 / Type A).